The sequence spans 185 residues: Lactoylglutathione lyase (185 aa).

The segment at 1 to 21 (MASEAKESPANNPGLSTVRDE) is disordered. One can recognise a VOC domain in the interval 27–174 (IMQQTMFRVK…DGYWIEIFDL (148 aa)). Substrate-binding residues include Gln30 and Arg34. Gln30 provides a ligand contact to Zn(2+). Glu96 is a Zn(2+) binding site. Substrate contacts are provided by residues Asn100, Arg120, His124, and 154 to 155 (KM). His124 is a Zn(2+) binding site. Position 170 (Glu170) interacts with Zn(2+). Glu170 acts as the Proton donor/acceptor in catalysis.

This sequence belongs to the glyoxalase I family. It depends on Zn(2+) as a cofactor.

The enzyme catalyses (R)-S-lactoylglutathione = methylglyoxal + glutathione. Its pathway is secondary metabolite metabolism; methylglyoxal degradation; (R)-lactate from methylglyoxal: step 1/2. Functionally, catalyzes the conversion of hemimercaptal, formed from methylglyoxal and glutathione, to S-lactoylglutathione. In Brassica juncea (Indian mustard), this protein is Lactoylglutathione lyase (GLY I).